The sequence spans 61 residues: Small ribosomal subunit protein uS14 (61 aa).

Residues cysteine 24, cysteine 27, cysteine 40, and cysteine 43 each contribute to the Zn(2+) site.

This sequence belongs to the universal ribosomal protein uS14 family. Zinc-binding uS14 subfamily. Part of the 30S ribosomal subunit. Contacts proteins S3 and S10. Zn(2+) is required as a cofactor.

In terms of biological role, binds 16S rRNA, required for the assembly of 30S particles and may also be responsible for determining the conformation of the 16S rRNA at the A site. The sequence is that of Small ribosomal subunit protein uS14 from Coprothermobacter proteolyticus (strain ATCC 35245 / DSM 5265 / OCM 4 / BT).